The sequence spans 96 residues: DNA-binding protein Saci_1468 (96 aa).

The protein belongs to the PDCD5 family.

This chain is DNA-binding protein Saci_1468, found in Sulfolobus acidocaldarius (strain ATCC 33909 / DSM 639 / JCM 8929 / NBRC 15157 / NCIMB 11770).